Reading from the N-terminus, the 400-residue chain is Methylthioribose kinase (400 aa).

ATP contacts are provided by residues N40, K57, and 111 to 113; that span reads EDL. D229 is a binding site for substrate. Residue 246-248 participates in ATP binding; that stretch reads DAE. Position 344 (R344) interacts with substrate.

This sequence belongs to the methylthioribose kinase family. In terms of assembly, homodimer.

It catalyses the reaction 5-(methylsulfanyl)-D-ribose + ATP = 5-(methylsulfanyl)-alpha-D-ribose 1-phosphate + ADP + H(+). Its pathway is amino-acid biosynthesis; L-methionine biosynthesis via salvage pathway; S-methyl-5-thio-alpha-D-ribose 1-phosphate from S-methyl-5'-thioadenosine (hydrolase route): step 2/2. Catalyzes the phosphorylation of methylthioribose into methylthioribose-1-phosphate. This is Methylthioribose kinase from Pectobacterium atrosepticum (strain SCRI 1043 / ATCC BAA-672) (Erwinia carotovora subsp. atroseptica).